We begin with the raw amino-acid sequence, 137 residues long: Large ribosomal subunit protein uL16 (137 aa).

Belongs to the universal ribosomal protein uL16 family. Part of the 50S ribosomal subunit.

Functionally, binds 23S rRNA and is also seen to make contacts with the A and possibly P site tRNAs. The sequence is that of Large ribosomal subunit protein uL16 from Streptococcus thermophilus (strain ATCC BAA-491 / LMD-9).